A 177-amino-acid chain; its full sequence is von Ebner gland protein 2 (177 aa).

An N-terminal signal peptide occupies residues 1–18 (MKALLLTFSLSLLAALQA). The cysteines at positions 80 and 172 are disulfide-linked.

It belongs to the calycin superfamily. Lipocalin family. As to quaternary structure, homodimer.

It localises to the secreted. In terms of biological role, could play a role in taste reception. Could be necessary for the concentration and delivery of sapid molecules in the gustatory system. The sequence is that of von Ebner gland protein 2 (Vegp2) from Rattus norvegicus (Rat).